Consider the following 121-residue polypeptide: Small ribosomal subunit protein uS11c (121 aa).

This sequence belongs to the universal ribosomal protein uS11 family. Part of the 30S ribosomal subunit.

The protein localises to the plastid. It localises to the chloroplast. The sequence is that of Small ribosomal subunit protein uS11c from Cyanidioschyzon merolae (strain NIES-3377 / 10D) (Unicellular red alga).